A 732-amino-acid chain; its full sequence is Inducible ornithine decarboxylase (732 aa).

The residue at position 355 (Lys-355) is an N6-(pyridoxal phosphate)lysine.

This sequence belongs to the Orn/Lys/Arg decarboxylase class-I family. Requires pyridoxal 5'-phosphate as cofactor.

It catalyses the reaction L-ornithine + H(+) = putrescine + CO2. It participates in amine and polyamine biosynthesis; putrescine biosynthesis via L-ornithine pathway; putrescine from L-ornithine: step 1/1. Functionally, the first enzyme leading to putrescine and thus polyamine synthesis. The sequence is that of Inducible ornithine decarboxylase from Escherichia coli (strain K12).